We begin with the raw amino-acid sequence, 692 residues long: MAREFSLPNTRNIGIMAHIDAGKTTTTERILFYTGRVHKIGEVHEGAATMDWMEQEQERGITITSAATTAQWNGHRINIIDTPGHVDFTVEVERSLRVLDGAVTVFDAKGGVEPQTETVWRQADRYGVPRMCYINKMDIMGANFDMCLGQIKSRLGANPVAIQYPIGAEDQFKGMVDLIEMKAIVYTDDLGKTSDSAEIPADLLARCEELRMAMVEAAAEQDEELMMKYLEGEELTNDEIRAALRKGTIDCKLTPVMCGSSYKNKGVQPMLDNVVAYLPSPVDIPAIKGTLPDTEDEVDRPADDNGPFSALAFKIMTDPYVGRLTFFRVYSGVLNSGSYVLNSTKGKRERVGRILQMHANHREEITTVYSGDIAAAVGLKDTTTGDTLCDEKAPVILESMDFPEPVISVAIEPKSKADQDKMGIGLSKLAEEDPTFRTRTDEETGQTIISGMGELHLEIIVDRLKREFKVESNVGAPQVAYRETFRNAAKVEGKFVRQSGGRGQYGHVWVEFAPLEAGQGFQFENKIVGGVVPREYIPAVQAGIEESMKNGVIAGFPLVDIKATIVDGSYHDVDSNEMAFKVAGSLALKEAAKKCGAVLLEPIMKVEVTMPEEYMGDVMGDLNSRRGRIEGMEARANAQVIRAMVPLSEMFGYSTILRSRTQGRGVYSMVIDHYEEVPKFIAEEIIKKSKGE.

Positions 8-282 constitute a tr-type G domain; it reads PNTRNIGIMA…NVVAYLPSPV (275 aa). GTP is bound by residues 17–24, 81–85, and 135–138; these read AHIDAGKT, DTPGH, and NKMD.

It belongs to the TRAFAC class translation factor GTPase superfamily. Classic translation factor GTPase family. EF-G/EF-2 subfamily.

It localises to the cytoplasm. Its function is as follows. Catalyzes the GTP-dependent ribosomal translocation step during translation elongation. During this step, the ribosome changes from the pre-translocational (PRE) to the post-translocational (POST) state as the newly formed A-site-bound peptidyl-tRNA and P-site-bound deacylated tRNA move to the P and E sites, respectively. Catalyzes the coordinated movement of the two tRNA molecules, the mRNA and conformational changes in the ribosome. This Brevibacillus brevis (strain 47 / JCM 6285 / NBRC 100599) protein is Elongation factor G.